The primary structure comprises 404 residues: Odorant receptor 74a (404 aa).

Residues 1-38 (MSFHRYRPRLPGGELAPMPWPVSLYRVLNHVAWPLEAE) are Cytoplasmic-facing. A helical transmembrane segment spans residues 39–59 (SGRWTVFLDRLMIFLGFLVFC). Topologically, residues 60–67 (EHNEVDFH) are extracellular. A helical transmembrane segment spans residues 68–88 (YLIANRQDMDNMLTGLPTYLI). Topologically, residues 89-141 (LVEMQIRCFQLAWHKDRFRALLQRFYAEIYVSEEMEPHLFASIQRQMLATRVN) are cytoplasmic. The helical transmembrane segment at 142-162 (STVYLLALLNFFLVPVTNVIY) threads the bilayer. Over 163-181 (HRREMLYKQVYPFDNTQLH) the chain is Extracellular. The helical transmembrane segment at 182 to 202 (FFIPLLVLNFWVGFIITSMLF) threads the bilayer. Topologically, residues 203 to 274 (GELNVMGELM…QRVEKEFTLR (72 aa)) are cytoplasmic. A helical transmembrane segment spans residues 275-295 (IFVMFAFSAGLLCALFFKAFT). The Extracellular portion of the chain corresponds to 296–303 (NPWGNVAY). Residues 304-324 (IVWFLAKFMELLALGMLGSIL) form a helical membrane-spanning segment. The Cytoplasmic segment spans residues 325 to 380 (LKTTDELGMMYYTADWEQVIHQSDNVGENVKLMKLVTLAIQLNSRPFFITGLNYFR). A helical membrane pass occupies residues 381–401 (VSLTAVLKIIQGAFSYFTFLN). Over 402 to 404 (SMR) the chain is Extracellular.

The protein belongs to the insect chemoreceptor superfamily. Heteromeric odorant receptor channel (TC 1.A.69) family. Or1a subfamily. In terms of assembly, interacts with Orco. Complexes exist early in the endomembrane system in olfactory sensory neurons (OSNs), coupling these complexes to the conserved ciliary trafficking pathway.

The protein localises to the cell membrane. Functionally, odorant receptor which mediates acceptance or avoidance behavior, depending on its substrates. The odorant receptor repertoire encodes a large collection of odor stimuli that vary widely in identity, intensity, and duration. May form a complex with Orco to form odorant-sensing units, providing sensitive and prolonged odorant signaling and calcium permeability. Involved in the behavioral responses to octanol, anisole, and 2-heptanone. The polypeptide is Odorant receptor 74a (Or74a) (Drosophila melanogaster (Fruit fly)).